Here is a 129-residue protein sequence, read N- to C-terminus: Small ribosomal subunit protein uS11 (129 aa).

It belongs to the universal ribosomal protein uS11 family. In terms of assembly, part of the 30S ribosomal subunit. Interacts with proteins S7 and S18. Binds to IF-3.

Its function is as follows. Located on the platform of the 30S subunit, it bridges several disparate RNA helices of the 16S rRNA. Forms part of the Shine-Dalgarno cleft in the 70S ribosome. The polypeptide is Small ribosomal subunit protein uS11 (Agrobacterium fabrum (strain C58 / ATCC 33970) (Agrobacterium tumefaciens (strain C58))).